We begin with the raw amino-acid sequence, 423 residues long: Subtilisin-like protease 2 (423 aa).

Positions 1–17 are cleaved as a signal peptide; it reads MQLLNLGLLLLLPFVAG. Positions 18–123 are excised as a propeptide; sequence EIAPQPEPLR…VHPDQHVYLA (106 aa). The region spanning 37–123 is the Inhibitor I9 domain; sequence QYIVTLKEGL…VHPDQHVYLA (87 aa). Positions 132 to 423 constitute a Peptidase S8 domain; the sequence is RWGLGYMSSK…RKFTLPKNTK (292 aa). Residues D170 and H202 each act as charge relay system in the active site. N249, N262, and N349 each carry an N-linked (GlcNAc...) asparagine glycan. S358 (charge relay system) is an active-site residue. Residue N389 is glycosylated (N-linked (GlcNAc...) asparagine).

This sequence belongs to the peptidase S8 family.

Its subcellular location is the secreted. In terms of biological role, secreted subtilisin-like serine protease with keratinolytic activity that contributes to pathogenicity. This chain is Subtilisin-like protease 2 (SUB2), found in Arthroderma otae (strain ATCC MYA-4605 / CBS 113480) (Microsporum canis).